Reading from the N-terminus, the 695-residue chain is L-type lectin-domain containing receptor kinase S.7 (695 aa).

The signal sequence occupies residues 1–23; it reads MPPRCRRLPLLFILLLAVRPLSA. Residues 24–331 are Extracellular-facing; it reads AAASSIAAAP…NHRRRHLFYK (308 aa). Positions 37–276 are legume-lectin like; that stretch reads YRRISWASNL…VERWTFRTFG (240 aa). Residues N45 and N279 are each glycosylated (N-linked (GlcNAc...) asparagine). Residues 286-320 are compositionally biased toward pro residues; sequence PTKYIGPMPPNNQPLPPPPSPSPSPPPPSPPPPPH. The segment at 286-323 is disordered; the sequence is PTKYIGPMPPNNQPLPPPPSPSPSPPPPSPPPPPHPNH. A helical transmembrane segment spans residues 332–352; it reads VLGGVLGGMVLLGLVVVGSAV. The Cytoplasmic portion of the chain corresponds to 353–695; sequence LLGRSVRRKN…TANTAFFSCR (343 aa). T376 carries the phosphothreonine modification. S378 bears the Phosphoserine mark. Residues T386 and T403 each carry the phosphothreonine modification. The region spanning 389–661 is the Protein kinase domain; the sequence is FDSGNVIGVG…SMLDGTAPLI (273 aa). Residues 395–403 and K418 contribute to the ATP site; that span reads IGVGGSGAT. The active-site Proton acceptor is the D514. Residue T657 is modified to Phosphothreonine.

It in the N-terminal section; belongs to the leguminous lectin family. The protein in the C-terminal section; belongs to the protein kinase superfamily. Ser/Thr protein kinase family. In terms of assembly, interacts with INP1. Interaction with INP1 is required for DAF1 polar localization at the future aperture sites in tetrads. In terms of processing, autophosphorylated at Thr-376; Ser-378; Thr-386; Thr-403 and Thr-657. Expressed in roots, leaves, lemma, palea, pistil and anthers.

Its subcellular location is the cell membrane. The protein localises to the cytoplasm. It localises to the cytosol. It carries out the reaction L-seryl-[protein] + ATP = O-phospho-L-seryl-[protein] + ADP + H(+). It catalyses the reaction L-threonyl-[protein] + ATP = O-phospho-L-threonyl-[protein] + ADP + H(+). In terms of biological role, legume-lectin receptor-like kinase required for normal pollen development and male fertility. Regulates pollen exine assembly and aperture development. Plays a critical role in annulus formation, and may participate in the formation of the fibrillar-granular layer underneath the operculum. May function by regulating the expression of genes involved in pollen exine development. Kinase activity is required for its function in pollen development. The chain is L-type lectin-domain containing receptor kinase S.7 from Oryza sativa subsp. japonica (Rice).